The chain runs to 600 residues: MTKEKLENELKTLPNSAGVYEYFNQEGKLLYVGKAKNLKNRVKSYFAFTPNLHANPGNSLRIQKMIQETVHLEFITTNSEADALILENSFIKQLHPKYNILLRDDKTYPYIYVDFKEEFPRFEITRKLVKKSKIKYFGPFFKGARELLDALYLYYPLKQKASCKSPCIFYQISRCLAPCDKRISKEKYREILDEAMHALLNPSVLLKNLEKQMLVLAQNENYEEAAKIRDQIATIKDLEVKVEIDIAKLEDFEVFALAFKNSMLSTLRFVVQNGKIISVNSKITPIKNDIQWDKNEIYKQLILENFSMDIPLLASVIYVYEEFEDRMLLEKILSQRFDKKISIKIPKIGEKRKICDLAFQNALLNIEKEQKNHDFTIQKELKSYFELENLPNDIEIFDNSHLQGVANVGAMVTYSVNSWDKSKYRKFHLKHKNDYDQMREVLTRRALDFDKIPPPDLWLIDGGKVLLDLAKEIILSTGANVDILAISKEKIDAKAHRAKGGAKDKIHSLKGEFSLSVNDKKLQFLQKLRDEAHRFAISFHQNTKKKQDLKSSKLANLGLSLGVIQKLLAYYGNFESIYKADFKDLAMLVGKKAAQKIKEN.

The 86-residue stretch at 15–100 folds into the GIY-YIG domain; the sequence is NSAGVYEYFN…IKQLHPKYNI (86 aa). A UVR domain is found at 203–238; it reads SVLLKNLEKQMLVLAQNENYEEAAKIRDQIATIKDL.

It belongs to the UvrC family. As to quaternary structure, interacts with UvrB in an incision complex.

It localises to the cytoplasm. Its function is as follows. The UvrABC repair system catalyzes the recognition and processing of DNA lesions. UvrC both incises the 5' and 3' sides of the lesion. The N-terminal half is responsible for the 3' incision and the C-terminal half is responsible for the 5' incision. This is UvrABC system protein C from Campylobacter jejuni subsp. doylei (strain ATCC BAA-1458 / RM4099 / 269.97).